The primary structure comprises 198 residues: Recombination protein RecR (198 aa).

The C4-type zinc finger occupies 57 to 72 (CSICGNLTDQDPCAIC). A Toprim domain is found at 80–175 (STILIVEDSR…KVTRLARGLA (96 aa)).

This sequence belongs to the RecR family.

Its function is as follows. May play a role in DNA repair. It seems to be involved in an RecBC-independent recombinational process of DNA repair. It may act with RecF and RecO. In Streptococcus suis (strain 05ZYH33), this protein is Recombination protein RecR.